The following is a 225-amino-acid chain: Suppressor of cytokine signaling 3 (225 aa).

Positions 22 to 33 are kinase inhibitory region (KIR); sequence LKTFSSKSEYQL. Residues 34–45 form an extended SH2 subdomain (ESS) region; sequence VVNAVRKLQESG. The region spanning 46 to 142 is the SH2 domain; it reads FYWSAVTGGE…APSFSLPPTE (97 aa). The disordered stretch occupies residues 141 to 160; the sequence is TEPSFEVQEQPPAQALPGGT. Residues 177–224 enclose the SOCS box domain; that stretch reads VLSRPLSSNVATLQHLCRKTVNGHLDSYEKVTQLPGPIREFLDQYDAP.

As to quaternary structure, interacts with multiple activated proteins of the tyrosine kinase signaling pathway including IGF1 receptor, insulin receptor and JAK2. Binding to JAK2 is mediated through the KIR and SH2 domains to a phosphorylated tyrosine residue within the JAK2 JH1 domain. Binds specific activated tyrosine residues of the leptin, EPO, IL12, GSCF and gp130 receptors. Interaction with CSNK1E stabilize SOCS3 protein. Component of the probable ECS(SOCS3) E3 ubiquitin-protein ligase complex which contains CUL5, RNF7/RBX2, Elongin BC complex and SOCS3. Interacts with CUL5, RNF7, ELOB and ELOC. Interacts with FGFR3. Interacts with INSR. Interacts with BCL10; this interaction may interfere with BCL10-binding with PELI2. Interacts with NOD2 (via CARD domain); the interaction promotes NOD2 degradation. In terms of processing, phosphorylated on tyrosine residues after stimulation by the cytokines, IL-2, EPO or IGF1.

It functions in the pathway protein modification; protein ubiquitination. In terms of biological role, SOCS family proteins form part of a classical negative feedback system that regulates cytokine signal transduction. SOCS3 is involved in negative regulation of cytokines that signal through the JAK/STAT pathway. Inhibits cytokine signal transduction by binding to tyrosine kinase receptors including IL6ST/gp130, LIF, erythropoietin, insulin, IL12, GCSF and leptin receptors. Binding to JAK2 inhibits its kinase activity and regulates IL6 signaling. Suppresses fetal liver erythropoiesis. Regulates onset and maintenance of allergic responses mediated by T-helper type 2 cells. Probable substrate recognition component of a SCF-like ECS (Elongin BC-CUL2/5-SOCS-box protein) E3 ubiquitin-protein ligase complex which mediates the ubiquitination and subsequent proteasomal degradation of target proteins. The protein is Suppressor of cytokine signaling 3 of Rattus norvegicus (Rat).